A 77-amino-acid polypeptide reads, in one-letter code: MKLIIFTGLVLFAIVSLIEAQAENEKACLPQYQVRTDAPGNCCSNLVCDCYGRYKSGARIGRNCFCLQKGVIYKREN.

Residues Met1–Ala20 form the signal peptide. Positions Gln21–Lys26 are excised as a propeptide.

Belongs to the neurotoxin 19 (CSTX) family. 08 (U8-Lctx) subfamily. Contains 4 disulfide bonds. Expressed by the venom gland.

Its subcellular location is the secreted. The sequence is that of U8-lycotoxin-Ls1w from Lycosa singoriensis (Wolf spider).